We begin with the raw amino-acid sequence, 115 residues long: NADH-ubiquinone oxidoreductase chain 3 (115 aa).

Transmembrane regions (helical) follow at residues 4 to 24, 55 to 75, and 87 to 107; these read FIVL…AFWL, FFLV…LLPL, and TMLT…YEWL.

This sequence belongs to the complex I subunit 3 family. As to quaternary structure, core subunit of respiratory chain NADH dehydrogenase (Complex I) which is composed of 45 different subunits. Interacts with TMEM186. Interacts with TMEM242.

It is found in the mitochondrion inner membrane. The catalysed reaction is a ubiquinone + NADH + 5 H(+)(in) = a ubiquinol + NAD(+) + 4 H(+)(out). Functionally, core subunit of the mitochondrial membrane respiratory chain NADH dehydrogenase (Complex I) which catalyzes electron transfer from NADH through the respiratory chain, using ubiquinone as an electron acceptor. Essential for the catalytic activity of complex I. This Reithrodontomys megalotis (Western harvest mouse) protein is NADH-ubiquinone oxidoreductase chain 3.